A 148-amino-acid polypeptide reads, in one-letter code: Small ribosomal subunit protein eS6 (148 aa).

Belongs to the eukaryotic ribosomal protein eS6 family.

This Pyrobaculum islandicum (strain DSM 4184 / JCM 9189 / GEO3) protein is Small ribosomal subunit protein eS6.